The sequence spans 156 residues: Arginine repressor (156 aa).

The protein belongs to the ArgR family.

It localises to the cytoplasm. Its pathway is amino-acid biosynthesis; L-arginine biosynthesis [regulation]. Its function is as follows. Regulates arginine biosynthesis genes. The sequence is that of Arginine repressor from Photorhabdus laumondii subsp. laumondii (strain DSM 15139 / CIP 105565 / TT01) (Photorhabdus luminescens subsp. laumondii).